Here is a 344-residue protein sequence, read N- to C-terminus: L-rhamnose-proton symporter (344 aa).

The next 10 helical transmembrane spans lie at 4–24, 38–58, 68–88, 101–121, 137–157, 175–195, 214–234, 259–279, 290–310, and 323–343; these read AITM…CFYA, WSVG…ALLL, FSLS…IGNI, MGIG…TPII, TLLG…AGQL, LVLA…MNAA, LPSY…FCFI, VLLS…YAWG, ISWM…GLVL, and VLSL…MGMA.

Belongs to the L-rhamnose transporter (TC 2.A.7.6) family.

The protein resides in the cell inner membrane. It catalyses the reaction L-rhamnopyranose(in) + H(+)(in) = L-rhamnopyranose(out) + H(+)(out). Uptake of L-rhamnose across the cytoplasmic membrane with the concomitant transport of protons into the cell (symport system). The sequence is that of L-rhamnose-proton symporter from Escherichia coli O157:H7.